The chain runs to 485 residues: BTB/POZ domain-containing protein YLR108C (485 aa).

One can recognise a BTB domain in the interval 26-121; that stretch reads EVFKIRIGQK…LIKEYDYHFT (96 aa).

It is found in the nucleus. This is BTB/POZ domain-containing protein YLR108C from Saccharomyces cerevisiae (strain ATCC 204508 / S288c) (Baker's yeast).